The following is a 103-amino-acid chain: Small ribosomal subunit protein uS10 (103 aa).

It belongs to the universal ribosomal protein uS10 family. Part of the 30S ribosomal subunit.

Involved in the binding of tRNA to the ribosomes. This is Small ribosomal subunit protein uS10 from Shewanella denitrificans (strain OS217 / ATCC BAA-1090 / DSM 15013).